A 424-amino-acid polypeptide reads, in one-letter code: MTSSNLIKQLQERGLVAQVTDEDALAERLAQGPISLYCGFDPTADSLHLGHLVPLLCLKRFQLAGHRPVALVGGATGMIGDPSFKASERKLNTEDTVNEWVEKIRHQVSPFLDFDCGENSAIAANNYDWFGGMNVLTFLRDIGKHFSVNQMINKEAVKQRLNRDDSGISFTEFSYNLLQAYDFACLNKNHGVALQIGGSDQWGNITSGIDLTRRLHQQQVYGLTVPLITKADGTKFGKTEGGAVWLDPKKTSPYKFYQFWINTADADVYRFLKFFTFMSLEEINALEEEDKNSGKAPRAQYVLAENVTGMVHGPEGLAAAKRITDSLFSGDLHDMTEADFAQLAQDGMPTVELNRDADLQQALVNAELVPSRGQARTMIGSNAVAINGEKQADPEYVFTDADRLFGRYTLLRRGKKHYCLISWL.

Tyr37 provides a ligand contact to L-tyrosine. The short motif at Pro42–His51 is the 'HIGH' region element. The L-tyrosine site is built by Tyr175 and Gln179. Residues Lys235–Thr239 carry the 'KMSKS' region motif. Lys238 serves as a coordination point for ATP. The S4 RNA-binding domain maps to Ala357–Gly414.

It belongs to the class-I aminoacyl-tRNA synthetase family. TyrS type 1 subfamily. Homodimer.

The protein localises to the cytoplasm. It catalyses the reaction tRNA(Tyr) + L-tyrosine + ATP = L-tyrosyl-tRNA(Tyr) + AMP + diphosphate + H(+). Catalyzes the attachment of tyrosine to tRNA(Tyr) in a two-step reaction: tyrosine is first activated by ATP to form Tyr-AMP and then transferred to the acceptor end of tRNA(Tyr). The polypeptide is Tyrosine--tRNA ligase (Yersinia pestis bv. Antiqua (strain Antiqua)).